Consider the following 379-residue polypeptide: All-trans-retinol dehydrogenase [NAD(+)] ADH4 (379 aa).

T1 is subject to N-acetylthreonine. 7 residues coordinate Zn(2+): C46, H68, C98, C101, C104, C112, and C179. NAD(+) contacts are provided by residues 204–209 (GLGGVG), D228, K233, 297–299 (VGV), and R374.

The protein belongs to the zinc-containing alcohol dehydrogenase family. Class-II subfamily. In terms of assembly, homodimer. The cofactor is Zn(2+).

The protein localises to the cytoplasm. The enzyme catalyses all-trans-retinol + NAD(+) = all-trans-retinal + NADH + H(+). It catalyses the reaction 9-cis-retinol + NAD(+) = 9-cis-retinal + NADH + H(+). It carries out the reaction 20-oxo-(5Z,8Z,11Z,14Z)-eicosatetraenoate + NAD(+) + H2O = (5Z,8Z,11Z,14Z)-eicosatetraenedioate + NADH + 2 H(+). The catalysed reaction is 20-hydroxy-(5Z,8Z,11Z,14Z)-eicosatetraenoate + NAD(+) = 20-oxo-(5Z,8Z,11Z,14Z)-eicosatetraenoate + NADH + H(+). The enzyme catalyses 1,4-benzoquinone + NADH + H(+) = hydroquinone + NAD(+). Its activity is regulated as follows. Oxidation of 20-HETE is inhibited by low concentrations of N-heptylformamide. Oxidation of 20-HETE is a decreased by 55-65% by either all-trans-retinol or all-trans-retinoic acid. Strongly inhibited by omega-hydroxy fatty acids. Functionally, catalyzes the NAD-dependent oxidation of either all-trans-retinol or 9-cis-retinol. Also oxidizes long chain omega-hydroxy fatty acids, such as 20-HETE, producing both the intermediate aldehyde, 20-oxoarachidonate and the end product, a dicarboxylic acid, (5Z,8Z,11Z,14Z)-eicosatetraenedioate. Also catalyzes the reduction of benzoquinones. The sequence is that of All-trans-retinol dehydrogenase [NAD(+)] ADH4 from Struthio camelus (Common ostrich).